Consider the following 233-residue polypeptide: Nickel import system ATP-binding protein NikE (233 aa).

Residues 2–228 (IELKHVTFGY…DRHPYTKELV (227 aa)) form the ABC transporter domain. 35–42 (GESGCGKS) contacts ATP.

It belongs to the ABC transporter superfamily. The complex is composed of two ATP-binding proteins (NikD and NikE), two transmembrane proteins (NikB and NikC) and a solute-binding protein (NikA).

The protein localises to the cell membrane. The enzyme catalyses Ni(2+)(out) + ATP + H2O = Ni(2+)(in) + ADP + phosphate + H(+). Its function is as follows. Part of the ABC transporter complex NikABCDE (Opp2) involved in nickel import. Probably responsible for energy coupling to the transport system. In Staphylococcus aureus (strain MSSA476), this protein is Nickel import system ATP-binding protein NikE.